Consider the following 289-residue polypeptide: Small ribosomal subunit protein uS2C (289 aa).

The protein belongs to the universal ribosomal protein uS2 family. As to quaternary structure, component of the small ribosomal subunit. Mature ribosomes consist of a small (40S) and a large (60S) subunit. The 40S subunit contains about 33 different proteins and 1 molecule of RNA (18S). The 60S subunit contains about 49 different proteins and 3 molecules of RNA (25S, 5.8S and 5S). Interacts with rps21.

It is found in the cytoplasm. Its function is as follows. Required for the assembly and/or stability of the 40S ribosomal subunit. Required for the processing of the 20S rRNA-precursor to mature 18S rRNA in a late step of the maturation of 40S ribosomal subunits. The sequence is that of Small ribosomal subunit protein uS2C (rps0c) from Schizosaccharomyces japonicus (strain yFS275 / FY16936) (Fission yeast).